The chain runs to 213 residues: LexA repressor (213 aa).

Positions 27–47 (QTEIARAFGFKGVRAAQYHLE) form a DNA-binding region, H-T-H motif. Catalysis depends on for autocatalytic cleavage activity residues Ser-133 and Lys-170.

It belongs to the peptidase S24 family. Homodimer.

The catalysed reaction is Hydrolysis of Ala-|-Gly bond in repressor LexA.. Represses a number of genes involved in the response to DNA damage (SOS response), including recA and lexA. In the presence of single-stranded DNA, RecA interacts with LexA causing an autocatalytic cleavage which disrupts the DNA-binding part of LexA, leading to derepression of the SOS regulon and eventually DNA repair. This chain is LexA repressor, found in Xanthomonas campestris.